Consider the following 119-residue polypeptide: Aspartate 1-decarboxylase (119 aa).

S25 (schiff-base intermediate with substrate; via pyruvic acid) is an active-site residue. At S25 the chain carries Pyruvic acid (Ser). Substrate is bound at residue T57. Y58 functions as the Proton donor in the catalytic mechanism. Residue 73–75 (GAA) coordinates substrate.

Belongs to the PanD family. Heterooctamer of four alpha and four beta subunits. It depends on pyruvate as a cofactor. Post-translationally, is synthesized initially as an inactive proenzyme, which is activated by self-cleavage at a specific serine bond to produce a beta-subunit with a hydroxyl group at its C-terminus and an alpha-subunit with a pyruvoyl group at its N-terminus.

The protein localises to the cytoplasm. It catalyses the reaction L-aspartate + H(+) = beta-alanine + CO2. The protein operates within cofactor biosynthesis; (R)-pantothenate biosynthesis; beta-alanine from L-aspartate: step 1/1. Functionally, catalyzes the pyruvoyl-dependent decarboxylation of aspartate to produce beta-alanine. This chain is Aspartate 1-decarboxylase, found in Ruthia magnifica subsp. Calyptogena magnifica.